The sequence spans 309 residues: Anamorsin homolog (309 aa).

The interval V4 to L169 is N-terminal SAM-like domain. The segment at T170–L218 is linker. [2Fe-2S] cluster contacts are provided by C230, C242, C245, and C247. The tract at residues C230–C247 is fe-S binding site A. C270, C273, C281, and C284 together coordinate [4Fe-4S] cluster. 2 consecutive short sequence motifs (cx2C motif) follow at residues C270–C273 and C281–C284. Residues C270–C284 form a fe-S binding site B region.

The protein belongs to the anamorsin family. In terms of assembly, monomer. [2Fe-2S] cluster serves as cofactor. The cofactor is [4Fe-4S] cluster.

Its subcellular location is the cytoplasm. The protein resides in the mitochondrion intermembrane space. In terms of biological role, component of the cytosolic iron-sulfur (Fe-S) protein assembly (CIA) machinery. Required for the maturation of extramitochondrial Fe-S proteins. Part of an electron transfer chain functioning in an early step of cytosolic Fe-S biogenesis, facilitating the de novo assembly of a [4Fe-4S] cluster on the cytosolic Fe-S scaffold complex. Electrons are transferred from NADPH via a FAD- and FMN-containing diflavin oxidoreductase. Together with the diflavin oxidoreductase, also required for the assembly of the diferric tyrosyl radical cofactor of ribonucleotide reductase (RNR), probably by providing electrons for reduction during radical cofactor maturation in the catalytic small subunit. In Branchiostoma floridae (Florida lancelet), this protein is Anamorsin homolog.